Here is a 483-residue protein sequence, read N- to C-terminus: PRAME family member 12 (483 aa).

An LRR 1; degenerate repeat occupies 97-122 (RWKLQVLDLRNVDENFWGIWSGASAL). The stretch at 177–201 (HVCCKELQIFGIAIHRIIEVLNTVE) is one LRR 2; degenerate repeat. An LRR 3; degenerate repeat occupies 202-228 (LDCIQEVEVCCPWELSILIRFAPYLGQ). One copy of the LRR 4; degenerate repeat lies at 229 to 264 (MRNLRKLVLFNIHVSACIPLDRKEQFVIQFTSQFLK). 5 LRR repeats span residues 265 to 290 (LDYFQKLYMHSVSFLEGHLDQLLRCL), 291 to 322 (QAPLETVVMTECLLSESDLKHLSWCPSIRQLK), 323 to 341 (ELDLRGITLTHFSPEPLSV), 347 to 374 (EATLQTLDLEDCGIVDSQLSAILPALSR), and 375 to 399 (CSQLSTFSFCGNLISMAALENLLRH).

Belongs to the PRAME family.

The protein is PRAME family member 12 of Homo sapiens (Human).